The chain runs to 600 residues: Elongation factor 4 (600 aa).

A tr-type G domain is found at 4 to 186 (DTIRNFSIIA…EIVKKIPPPE (183 aa)). GTP contacts are provided by residues 16–21 (DHGKST) and 133–136 (NKID).

Belongs to the TRAFAC class translation factor GTPase superfamily. Classic translation factor GTPase family. LepA subfamily.

The protein resides in the cell inner membrane. It catalyses the reaction GTP + H2O = GDP + phosphate + H(+). Its function is as follows. Required for accurate and efficient protein synthesis under certain stress conditions. May act as a fidelity factor of the translation reaction, by catalyzing a one-codon backward translocation of tRNAs on improperly translocated ribosomes. Back-translocation proceeds from a post-translocation (POST) complex to a pre-translocation (PRE) complex, thus giving elongation factor G a second chance to translocate the tRNAs correctly. Binds to ribosomes in a GTP-dependent manner. In Geobacter sulfurreducens (strain ATCC 51573 / DSM 12127 / PCA), this protein is Elongation factor 4.